Consider the following 128-residue polypeptide: Cystatin-1 (128 aa).

The N-terminal stretch at 1–17 is a signal peptide; that stretch reads MIRSAVVLTVLVGVCLA. Positions 20-128 constitute a Cystatin domain; sequence GFVGGWSQVD…TKEVTSFECN (109 aa). Disulfide bonds link cysteine 84-cysteine 96 and cysteine 107-cysteine 127.

This sequence belongs to the cystatin family. In terms of tissue distribution, mainly expressed in gut.

Its subcellular location is the secreted. Inhibitor of cysteine proteinases. Strongly inhibits mammalian cathepsin B and H, and moderately inhibits mammalian cathepsin C. Also inhibits endogenous cathepsin B-like but not cathepsin C-like proteinases. May have a protective role against undesired digestion of a stored blood meal by endogenous peptidases. This chain is Cystatin-1, found in Ornithodoros moubata (Soft tick).